A 240-amino-acid chain; its full sequence is 1-(5-phosphoribosyl)-5-[(5-phosphoribosylamino)methylideneamino] imidazole-4-carboxamide isomerase 2 (240 aa).

Asp8 functions as the Proton acceptor in the catalytic mechanism. The active-site Proton donor is the Asp129.

This sequence belongs to the HisA/HisF family.

It localises to the cytoplasm. The catalysed reaction is 1-(5-phospho-beta-D-ribosyl)-5-[(5-phospho-beta-D-ribosylamino)methylideneamino]imidazole-4-carboxamide = 5-[(5-phospho-1-deoxy-D-ribulos-1-ylimino)methylamino]-1-(5-phospho-beta-D-ribosyl)imidazole-4-carboxamide. The protein operates within amino-acid biosynthesis; L-histidine biosynthesis; L-histidine from 5-phospho-alpha-D-ribose 1-diphosphate: step 4/9. The protein is 1-(5-phosphoribosyl)-5-[(5-phosphoribosylamino)methylideneamino] imidazole-4-carboxamide isomerase 2 of Ruegeria sp. (strain TM1040) (Silicibacter sp.).